Consider the following 466-residue polypeptide: FERM domain-containing protein 8 (466 aa).

N-acetylmethionine is present on methionine 1. The disordered stretch occupies residues 1–21 (MEGAEGNAGQPGPAERSHRSS). A Phosphoserine modification is found at serine 24. Residues 30–377 (ADVLVYLADD…YCIELSQAAE (348 aa)) form the FERM domain. Positions 379–409 (TLSQESASGPHEAPSPSPPPTQRPKLRRQGS) are disordered. Serine 384 carries the post-translational modification Phosphoserine. Residues 391-400 (APSPSPPPTQ) are compositionally biased toward pro residues. Residue serine 409 is modified to Phosphoserine. Threonine 420 carries the phosphothreonine modification. Phosphoserine occurs at positions 440 and 447. Polar residues predominate over residues 442–460 (FSRQLSSSQGSYTVVQPTD). Residues 442–466 (FSRQLSSSQGSYTVVQPTDDSLEQS) form a disordered region.

Interacts with iRhom proteins, including iRhom2/RHBDF2 (via cytoplasmic N-termini); this interaction leads to mutual protein stabilization. Interacts with LRP6; this interaction affects LRP6-binding to AXIN1. Widely expressed (at protein level).

The protein resides in the cytoplasm. Its subcellular location is the cytosol. The protein localises to the cell membrane. Its function is as follows. Promotes the cell surface stability of iRhom1/RHBDF1 and iRhom2/RHBDF2 and prevents their degradation via the endolysosomal pathway. By acting on iRhoms, involved in ADAM17-mediated shedding of TNF, amphiregulin/AREG, HBEGF and TGFA from the cell surface. Negatively regulates Wnt signaling, possibly by antagonizing the recruitment of AXIN1 to LRP6. The protein is FERM domain-containing protein 8 (Frmd8) of Mus musculus (Mouse).